The following is a 426-amino-acid chain: Glucan 1,3-beta-glucosidase (426 aa).

The N-terminal stretch at 1–20 (MLYPRALLPAAVALASLVLA) is a signal peptide. Residue glutamate 208 is the Proton donor of the active site. Intrachain disulfides connect cysteine 290-cysteine 416 and cysteine 315-cysteine 343. Residue glutamate 307 is the Nucleophile of the active site.

Belongs to the glycosyl hydrolase 5 (cellulase A) family.

It localises to the secreted. The enzyme catalyses Successive hydrolysis of beta-D-glucose units from the non-reducing ends of (1-&gt;3)-beta-D-glucans, releasing alpha-glucose.. Beta-glucanases participate in the metabolism of beta-glucan, the main structural component of the cell wall. It could also function biosynthetically as a transglycosylase. The polypeptide is Glucan 1,3-beta-glucosidase (Blumeria graminis (Powdery mildew)).